Reading from the N-terminus, the 818-residue chain is Catenin beta (818 aa).

2 stretches are compositionally biased toward polar residues: residues 1–21 and 48–66; these read METY…TPQG and GDSG…SVSS. 2 disordered regions span residues 1–24 and 48–71; these read METY…GQYM and GDSG…HGLD. ARM repeat units lie at residues 164-203, 248-287, 412-451, 454-495, 501-541, 543-582, and 648-687; these read NYQD…QLSK, RQGL…NLLL, DAAT…NLTC, QRNK…HLTS, EMAQ…NLAL, PANH…NTSA, and KEGA…RMSE. Positions 732-818 are disordered; the sequence is QGFRGYQGSG…QMAAWFDTDL (87 aa).

The protein belongs to the beta-catenin family.

It is found in the cytoplasm. The protein resides in the cytoskeleton. Binds to the cytoplasmic domain of the cell-cell adhesion molecule E-cadherin, and perhaps to other (membrane) proteins. The association of catenins to cadherins produces a complex which is linked to the actin filament network, and which seems to be of primary importance for cadherins cell-adhesion properties. This is Catenin beta from Urechis caupo (Innkeeper worm).